Reading from the N-terminus, the 932-residue chain is Progesterone receptor (932 aa).

Residues 1–164 are AF3; mediates transcriptional activation; it reads MTELKAKGPR…PATQGVLSPL (164 aa). The disordered stretch occupies residues 1–254; that stretch reads MTELKAKGPR…GGAAAGGAAA (254 aa). Residues 1–565 form a modulating, Pro-Rich region; it reads MTELKAKGPR…YSFESLPQKI (565 aa). Serine 20 is subject to Phosphoserine. An LXXL motif 1 motif is present at residues 55-59; it reads LDGLL. Serine 81 carries the post-translational modification Phosphoserine. The span at 88-103 shows a compositional bias: low complexity; sequence SRAEATRGAGGSSSSP. Residues 115-119 carry the LXXL motif 2 motif; the sequence is LDTLL. 2 positions are modified to phosphoserine: serine 130 and serine 162. The mediates transcriptional transrepression stretch occupies residues 165–304; sequence MSRSGGKAGD…LATTVMDFIH (140 aa). Residues 183–187 carry the Nuclear localization signal motif; the sequence is KVLPQ. A phosphoserine mark is found at serine 190 and serine 213. The span at 220 to 231 shows a compositional bias: acidic residues; the sequence is EVEEEDGSESED. The segment covering 232–254 has biased composition (low complexity); the sequence is SAGPLLKGKPRALGGAAAGGAAA. Serine 293 is modified (phosphoserine; by MAPK1). Low complexity predominate over residues 334 to 349; that stretch reads AASAFAPPRSSPSASS. The tract at residues 334-356 is disordered; that stretch reads AASAFAPPRSSPSASSTPVAVGD. Serine 344 is subject to Phosphoserine; by MAPK. Residue lysine 387 forms a Glycyl lysine isopeptide (Lys-Gly) (interchain with G-Cter in SUMO); alternate linkage. Lysine 387 is covalently cross-linked (Glycyl lysine isopeptide (Lys-Gly) (interchain with G-Cter in ubiquitin); alternate). 2 disordered regions span residues 414 to 451 and 468 to 499; these read PDFP…SSAS and PPQQ…STAA. Over residues 417-432 the composition is skewed to pro residues; the sequence is PLGPPPPLPPRAPPSR. Positions 433 to 451 are enriched in low complexity; sequence PGEAAVTAAPASASVSSAS. The AF1; mediates transcriptional activation stretch occupies residues 455–545; sequence STLECILYKA…VYPPYLNYLR (91 aa). Residues 470-480 show a composition bias toward pro residues; sequence QQGPFAPPPSK. A Glycyl lysine isopeptide (Lys-Gly) (interchain with G-Cter in SUMO) cross-link involves residue lysine 530. 2 consecutive NR C4-type zinc fingers follow at residues 566–586 and 602–626; these read CLIC…CGSC and CAGR…LRKC. Residues 566–638 constitute a DNA-binding region (nuclear receptor); sequence CLICGDEASG…AGMVLGGRKF (73 aa). Residue serine 675 is modified to Phosphoserine. The region spanning 678-912 is the NR LBD domain; it reads QDIQLIPPLI…EFPEMMSEVI (235 aa). The interval 686 to 932 is AF2; mediates transcriptional activation; that stretch reads LINLLMSIEP…MVKPLLFHKK (247 aa). Residue arginine 765 coordinates progesterone.

This sequence belongs to the nuclear hormone receptor family. In terms of assembly, interacts with SMARD1 and UNC45A. Interacts with CUEDC2; the interaction promotes ubiquitination, decreases sumoylation, and represses transcriptional activity. Interacts with PIAS3; the interaction promotes sumoylation of PR in a hormone-dependent manner, inhibits DNA-binding, and alters nuclear export. Interacts with SP1; the interaction requires ligand-induced phosphorylation on Ser-344 by ERK1/2-MAPK. Interacts with PRMT2. Interacts with NCOA2 and NCOA1. Interacts with KLF9. Interacts with GTF2B. Phosphorylated on multiple serine sites. Several of these sites are hormone-dependent. Phosphorylation on Ser-293 is highly hormone-dependent and modulates ubiquitination and sumoylation on Lys-387. Phosphorylation on Ser-102 and Ser-344 also requires induction by hormone. Basal phosphorylation on Ser-81, Ser-162 and Ser-190 is increased in response to progesterone and can be phosphorylated in vitro by the CDK2-A1 complex. Phosphorylation at Ser-162 and Ser-293, but not at Ser-190, is impaired during the G(2)/M phase of the cell cycle. Phosphorylation on Ser-344 by ERK1/2 MAPK is required for interaction with SP1. In terms of processing, sumoylation is hormone-dependent and represses transcriptional activity. Sumoylation on all three sites is enhanced by PIAS3. Desumoylated by SENP1. Sumoylation on Lys-387, the main site of sumoylation, is repressed by ubiquitination on the same site, and modulated by phosphorylation at Ser-293. Post-translationally, ubiquitination is hormone-dependent and represses sumoylation on the same site. Promoted by MAPK-mediated phosphorylation on Ser-293. Ubiquitinated by UBR5, leading to its degradation: UBR5 specifically recognizes and binds ligand-bound PGR when it is not associated with coactivators (NCOAs). In presence of NCOAs, the UBR5-degron is not accessible, preventing its ubiquitination and degradation. Palmitoylated by ZDHHC7 and ZDHHC21. Palmitoylation is required for plasma membrane targeting and for rapid intracellular signaling via ERK and AKT kinases and cAMP generation.

The protein resides in the nucleus. Its subcellular location is the cytoplasm. Its function is as follows. The steroid hormones and their receptors are involved in the regulation of eukaryotic gene expression and affect cellular proliferation and differentiation in target tissues. Transcriptional activator of several progesteron-dependent promoters in a variety of cell types. Involved in activation of SRC-dependent MAPK signaling on hormone stimulation. This Hylobates lar (Lar gibbon) protein is Progesterone receptor (PGR).